The following is a 238-amino-acid chain: MORN repeat-containing protein 3 (238 aa).

7 MORN repeats span residues 38–60, 62–84, 91–113, 114–136, 137–159, 160–182, and 184–205; these read YTGE…RRKS, YEGD…DSNT, YSGY…AKEY, YEGE…NGDI, YEGE…NENR, YEGS…NKGQ, and YEGV…GRTE.

Its subcellular location is the cytoplasmic vesicle. It is found in the secretory vesicle. It localises to the acrosome. Assembles a suppression complex (suppresome) by tethering SIRT1 and MDM2 to regulate composite modifications of p53/TP53. Confers both deacetylation-mediated functional inactivation, by SIRT1, and ubiquitination-dependent degradation, by MDM2, of p53/TP53, promoting a proliferative and cell survival behaviors. May play a role in the regulation of spermatogenesis. This chain is MORN repeat-containing protein 3 (morn3), found in Xenopus laevis (African clawed frog).